The chain runs to 377 residues: Histidinol-phosphate aminotransferase 2 (377 aa).

Residues Asn17–Pro44 form a disordered region. N6-(pyridoxal phosphate)lysine is present on Lys228.

The protein belongs to the class-II pyridoxal-phosphate-dependent aminotransferase family. Histidinol-phosphate aminotransferase subfamily. As to quaternary structure, homodimer. Requires pyridoxal 5'-phosphate as cofactor.

It carries out the reaction L-histidinol phosphate + 2-oxoglutarate = 3-(imidazol-4-yl)-2-oxopropyl phosphate + L-glutamate. The protein operates within amino-acid biosynthesis; L-histidine biosynthesis; L-histidine from 5-phospho-alpha-D-ribose 1-diphosphate: step 7/9. In Psychrobacter arcticus (strain DSM 17307 / VKM B-2377 / 273-4), this protein is Histidinol-phosphate aminotransferase 2.